Reading from the N-terminus, the 611-residue chain is MPILRSATSTQGRNMAGARALWRATGMKENDFGKPIIAVVNSFTQFVPGHVHLRDMGKLVAEQIEAAGGVAKEFNTIAVDDGIAMGHGGMLYSLPSRDLIADSVEYMVNAHCADAMVCISNCDKITPGMLMAAMRLNIPAVFVSGGPMEAGKTKLSDQLIKLDLVDAMMKSADKTVCDDDVDAIEKSACPTCGSCSGMFTANSMNCLTEALGLSLPGNGSMLATHADRKELFLTAGRQIVELCKRYYEQDDASVLPRSIATKAAFENAMSLDIAMGGSTNTVLHLLAAAQEAEVDFTMADIDRLSRKVPCLSKVAPNTNKYHMEDVHRAGGIMAILGELERADLLHSDTRTVLGMTIGEQIAKYDITLTKDEAVHKFFRAGPAGIRTTKAFSQDCRWDTVDDDRQNGCIRSKEFAYSQDGGLAMLTGNIALDGCIVKTAGVDESILKFTGDAIVFESQEEAVEGILGGKVRAGHVVIIRYEGPKGGPGMQEMLYPTTYLKSIGLGKECALLTDGRFSGGTSGLSIGHCSPEAASGGTIGLVRDGDKIAIDIPNRSIQLLVSDEELAVRRAEQDTKGWKPANRQREVSMALKMFGHFATSADKGAVRDKTKL.

Mg(2+) is bound at residue Asp81. A [2Fe-2S] cluster-binding site is contributed by Cys122. Asp123 and Lys124 together coordinate Mg(2+). An N6-carboxylysine modification is found at Lys124. [2Fe-2S] cluster is bound at residue Cys195. Residue Glu491 participates in Mg(2+) binding. Catalysis depends on Ser517, which acts as the Proton acceptor.

The protein belongs to the IlvD/Edd family. In terms of assembly, homodimer. Requires [2Fe-2S] cluster as cofactor. Mg(2+) serves as cofactor.

It catalyses the reaction (2R)-2,3-dihydroxy-3-methylbutanoate = 3-methyl-2-oxobutanoate + H2O. It carries out the reaction (2R,3R)-2,3-dihydroxy-3-methylpentanoate = (S)-3-methyl-2-oxopentanoate + H2O. It participates in amino-acid biosynthesis; L-isoleucine biosynthesis; L-isoleucine from 2-oxobutanoate: step 3/4. It functions in the pathway amino-acid biosynthesis; L-valine biosynthesis; L-valine from pyruvate: step 3/4. Its function is as follows. Functions in the biosynthesis of branched-chain amino acids. Catalyzes the dehydration of (2R,3R)-2,3-dihydroxy-3-methylpentanoate (2,3-dihydroxy-3-methylvalerate) into 2-oxo-3-methylpentanoate (2-oxo-3-methylvalerate) and of (2R)-2,3-dihydroxy-3-methylbutanoate (2,3-dihydroxyisovalerate) into 2-oxo-3-methylbutanoate (2-oxoisovalerate), the penultimate precursor to L-isoleucine and L-valine, respectively. The chain is Dihydroxy-acid dehydratase from Actinobacillus pleuropneumoniae serotype 5b (strain L20).